We begin with the raw amino-acid sequence, 1773 residues long: MDSDSERASLESIKDNSECVHVSNEPNLTATCVDSSVGEEGVTDVNSSAAVSELVPPEQGEGALLNSVPEISERGIPVDVVSSVDGGGEENAAFNIQEIDSVGGDAAAVEEVPLKSSSVVGEGREEEAGASIVKEEDFVAEANLSGDRLEENKEVSMEEEPSSHELSVCEVNGVDSLNDEENREVGEQIVCGSMGGEEIESDLESKKEKVDVIEEETTAQAASLVNAIEIPDDKEVACVAGFTEISSQDKGLDESGNGFLDEEPVKELQIGEGAKDLTDGDAKEGVDVTEDEMDIQVLKKSKEEEKVDSTTELEIETMRLEVHDVATEMSDKTVISSAVVTQFTGETSNDKETVMDDVKEDVDKDSEAGKSLDIHVPEATEEVDTDVNYGVGIEKEGDGVGGAEEAGQTVDLEEIREENQELSKELAQVDETKISEMSEVTETMIKDEDQEKDDNMTDLAEDVENHRDSSVADIEEGREDHEDMGVTETQKETVLGKVDRTKIAEVSEETDTRIEDEDQEKDDEMTDVAEDVKTHGDSSVADIEEGRESQEEMTETQEDSVMADEEPEEVEEENKSAGGKRKRGRNTKTVKGTGKKKEEDVCFMCFDGGDLVLCDRRGCTKAYHPSCVDRDEAFFQTKGKWNCGWHLCSKCEKTATYLCYTCMFSLCKGCAKDAVFFCIRGNKGLCETCMETVKLIERKQQEKEPAQLDFNDKTSWEYLFKDYWIDLKTQLSLSPEELDQAKRPLKGHETNASKQGTASETDYVTDGGSDSDSSPKKRKTRSRSKSGSAEKILSSGDKNLSDETMEWASKELLDLVVHMRRGDRSFLPMLEVQTLLLAYIKRYNLRDPRRKSQVICDSRLQNLFGKSHVGHFEMLNLLDSHFLKKEQNQADDIQGDIVDTEEPNHVDVDENLDHPVKSGKDKKRKTRKKNVRKGRQSNLDDFAAVDMHNINLIYLRRSLVEDLLEDSTAFEEKVASAFVRLRISGNQKQDLYRLVQVVGTSKAPEPYKVGKKTTDYVLEILNLDKTEVISIDIISNQDFTEDECKRLKQSIKCGLINRLTVGDIQEKAIALQEVRVKNLLEAEILRFSHLRDRASDMGRRKEYPYLLKLSNSLTMLTLRECVEKLQLLKSPEERQRRLEEIPEIHADPKMDPDCESEDEDEKEEKEKEKQLRPRSSSFNRRGRDPISPRKGGFSSNESWTGTSNYSNTSANRELSRSYSGRGSTGRGDYLGSSDDKVSDSMWTSAREREVQPSLGSEKPRSVSIPETPARSSRAIAPPELSPRIASEISMAPPAVVSQPVPKSNDSEKIWHYKDPSGKVQGPFSMAQLRKWNNTGYFPAKLEIWKANESPLDSVLLTDALAGLFQKQTQAVDNSYMKAQVAAFSGQSSQSEPNLGFAARIAPTTIEIPRNSQDTWSQGGSLPSPTPNQITTPTAKRRNFESRWSPTKPSPQSANQSMNYSVAQSGQSQTSRIDIPVVVNSAGALQPQTYPIPTPDPINVSVNHSATLHSPTPAGGKQSWGSMQTDHGGSNTPSSQNNSTSYGTPSPSVLPSQSQPGFPPSDSWKVAVPSQPNAQAQAQWGMNMVNNNQNSAQPQAPANQNSSWGQGTVNPNMGWVGPAQTGVNVNWGGSSVPSTVQGITHSGWVAPVQGQTQAYPNPGWGPTGHPQSQSQSQVQAQAGTTGSGWMQPGQGIQSGNSNQNWGTQNQTAIPSGGSGGNQAGYWGNQQQSQNGDSGYGWNRQSGGQQNNFKGQRVCKFFRENGHCRKGASCNYLHN.

A disordered region spans residues 145-166 (SGDRLEENKEVSMEEEPSSHEL). The segment covering 147–156 (DRLEENKEVS) has biased composition (basic and acidic residues). A coiled-coil region spans residues 196-218 (GEEIESDLESKKEKVDVIEEETT). 3 disordered regions span residues 270–290 (IGEGAKDLTDGDAKEGVDVTE), 361–409 (DVDK…AGQT), and 434–591 (ISEM…KTVK). 2 stretches are compositionally biased toward basic and acidic residues: residues 273-286 (GAKDLTDGDAKEGV) and 361-378 (DVDKDSEAGKSLDIHVPE). The stretch at 403–437 (AEEAGQTVDLEEIREENQELSKELAQVDETKISEM) forms a coiled coil. Composition is skewed to basic and acidic residues over residues 444–455 (MIKDEDQEKDDN) and 497–513 (KVDRTKIAEVSEETDTR). Composition is skewed to acidic residues over residues 514–529 (IEDEDQEKDDEMTDVA) and 551–572 (EEMTETQEDSVMADEEPEEVEE). Basic residues predominate over residues 578-588 (GGKRKRGRNTK). The Nuclear localization signal 1 motif lies at 581 to 588 (RKRGRNTK). The segment at 599 to 665 (EDVCFMCFDG…TYLCYTCMFS (67 aa)) adopts a PHD-type zinc-finger fold. Over residues 741–751 (AKRPLKGHETN) the composition is skewed to basic and acidic residues. Residues 741-797 (AKRPLKGHETNASKQGTASETDYVTDGGSDSDSSPKKRKTRSRSKSGSAEKILSSGD) form a disordered region. Over residues 752–762 (ASKQGTASETD) the composition is skewed to polar residues. The region spanning 801 to 884 (SDETMEWASK…LNLLDSHFLK (84 aa)) is the SWIB/MDM2 domain. The span at 903 to 919 (PNHVDVDENLDHPVKSG) shows a compositional bias: basic and acidic residues. The segment at 903–935 (PNHVDVDENLDHPVKSGKDKKRKTRKKNVRKGR) is disordered. The span at 920-935 (KDKKRKTRKKNVRKGR) shows a compositional bias: basic residues. Positions 921–928 (DKKRKTRK) match the Nuclear localization signal 2 motif. The Plus3 domain occupies 944–1076 (AVDMHNINLI…KAIALQEVRV (133 aa)). Residues 1139 to 1152 (EEIPEIHADPKMDP) are compositionally biased toward basic and acidic residues. The segment at 1139-1274 (EEIPEIHADP…PETPARSSRA (136 aa)) is disordered. Over residues 1153-1163 (DCESEDEDEKE) the composition is skewed to acidic residues. The span at 1193-1212 (FSSNESWTGTSNYSNTSANR) shows a compositional bias: polar residues. A Phosphoserine modification is found at Ser-1281. One can recognise a GYF domain in the interval 1307–1361 (EKIWHYKDPSGKVQGPFSMAQLRKWNNTGYFPAKLEIWKANESPLDSVLLTDALA). Composition is skewed to polar residues over residues 1409–1433 (RNSQDTWSQGGSLPSPTPNQITTPT), 1441–1469 (SRWSPTKPSPQSANQSMNYSVAQSGQSQT), 1499–1509 (VSVNHSATLHS), and 1518–1528 (SWGSMQTDHGG). Disordered regions lie at residues 1409–1469 (RNSQ…QSQT), 1485–1605 (QPQT…SWGQ), and 1649–1746 (GQTQ…QQNN). Over residues 1529-1555 (SNTPSSQNNSTSYGTPSPSVLPSQSQP) the composition is skewed to low complexity. The span at 1569–1579 (SQPNAQAQAQW) shows a compositional bias: polar residues. Low complexity-rich tracts occupy residues 1585–1602 (NNNQNSAQPQAPANQNSS) and 1666–1677 (QSQSQSQVQAQA). The segment covering 1678 to 1708 (GTTGSGWMQPGQGIQSGNSNQNWGTQNQTAI) has biased composition (polar residues). Positions 1722 to 1735 (GNQQQSQNGDSGYG) are enriched in low complexity. Positions 1737 to 1746 (NRQSGGQQNN) are enriched in polar residues. The C3H1-type zinc finger occupies 1747–1773 (FKGQRVCKFFRENGHCRKGASCNYLHN).

In terms of assembly, interacts with unmethylated histone H3 and AGO2. The interaction with AGO2 in required to direct DNA methylation and silencing. Expressed in seedlings, mostly in the vasculature and shoot apices of young seedlings.

The protein localises to the nucleus. Its function is as follows. Plays a central role in integrating RNA silencing and chromatin signals in 21 nt siRNA-dependent DNA methylation on cytosine pathway leading to transcriptional gene silencing of specific sequences. Involved in a chromatin-based RNA silencing pathway that encompasses both post-transcriptional gene silencing (PTGS) (e.g. RDR1, RDR6 and AGO2) and transcriptional gene silencing (TGS) (e.g. siRNA-dependent DNA methylation and histone H3) components. Mediates siRNA accumulation at specific chromatin loci. Binds H3K4me0 through its PHD to enforce low levels of H3K4 methylation and gene silencing at a subset of genomic loci. This Arabidopsis thaliana (Mouse-ear cress) protein is Zinc finger CCCH domain-containing protein 19 (NERD).